A 168-amino-acid polypeptide reads, in one-letter code: Cyanate hydratase (168 aa).

Catalysis depends on residues arginine 91, glutamate 94, and serine 117.

Belongs to the cyanase family.

It carries out the reaction cyanate + hydrogencarbonate + 3 H(+) = NH4(+) + 2 CO2. Catalyzes the reaction of cyanate with bicarbonate to produce ammonia and carbon dioxide. The protein is Cyanate hydratase of Arabidopsis thaliana (Mouse-ear cress).